The following is a 305-amino-acid chain: Mitochondrial uncoupling protein 2 (305 aa).

Solcar repeat units lie at residues 10-104, 114-205, and 214-297; these read ISFL…VKTL, IPLY…IKET, and DSVL…VKKV. 6 helical membrane passes run 16 to 36, 73 to 93, 120 to 140, 179 to 199, 220 to 240, and 270 to 290; these read FICS…LDTA, ISGL…YGGL, ILAA…TDLV, TGLG…LASY, LLAG…IDVV, and YKGF…MFLT.

It belongs to the mitochondrial carrier (TC 2.A.29) family.

It is found in the mitochondrion inner membrane. Functionally, PUMPS are mitochondrial transporter proteins that create proton leaks across the inner mitochondrial membrane, thus uncoupling oxidative phosphorylation. This leads to a decrease in the efficiency of oxidative phosphorylation and an increase in heat production. May be involved in protecting plant cells against oxidative stress damage. The protein is Mitochondrial uncoupling protein 2 (PUMP2) of Arabidopsis thaliana (Mouse-ear cress).